A 237-amino-acid polypeptide reads, in one-letter code: Lipoprotein-releasing system ATP-binding protein LolD (237 aa).

The 222-residue stretch at 16–237 (LKCEGLTRIY…LDQGRLSEDA (222 aa)) folds into the ABC transporter domain. 52–59 (GSSGSGKT) serves as a coordination point for ATP.

Belongs to the ABC transporter superfamily. Lipoprotein translocase (TC 3.A.1.125) family. The complex is composed of two ATP-binding proteins (LolD) and two transmembrane proteins (LolC and LolE).

The protein localises to the cell inner membrane. In terms of biological role, part of the ABC transporter complex LolCDE involved in the translocation of mature outer membrane-directed lipoproteins, from the inner membrane to the periplasmic chaperone, LolA. Responsible for the formation of the LolA-lipoprotein complex in an ATP-dependent manner. This chain is Lipoprotein-releasing system ATP-binding protein LolD, found in Chromohalobacter salexigens (strain ATCC BAA-138 / DSM 3043 / CIP 106854 / NCIMB 13768 / 1H11).